The sequence spans 373 residues: Peptide chain release factor 2 (373 aa).

Residue glutamine 252 is modified to N5-methylglutamine.

Belongs to the prokaryotic/mitochondrial release factor family. Post-translationally, methylated by PrmC. Methylation increases the termination efficiency of RF2.

Its subcellular location is the cytoplasm. Functionally, peptide chain release factor 2 directs the termination of translation in response to the peptide chain termination codons UGA and UAA. In Staphylococcus saprophyticus subsp. saprophyticus (strain ATCC 15305 / DSM 20229 / NCIMB 8711 / NCTC 7292 / S-41), this protein is Peptide chain release factor 2.